Here is a 270-residue protein sequence, read N- to C-terminus: Catechol 1,2-dioxygenase (270 aa).

Fe cation is bound by residues Tyr152, Tyr186, His210, and His212.

Belongs to the intradiol ring-cleavage dioxygenase family. Fe(3+) serves as cofactor.

It carries out the reaction catechol + O2 = cis,cis-muconate + 2 H(+). This chain is Catechol 1,2-dioxygenase (catA), found in Rhodococcus opacus (Nocardia opaca).